Here is a 180-residue protein sequence, read N- to C-terminus: Crossover junction endodeoxyribonuclease RuvC (180 aa).

Active-site residues include aspartate 7, glutamate 66, and aspartate 138. Residues aspartate 7, glutamate 66, and aspartate 138 each contribute to the Mg(2+) site.

Belongs to the RuvC family. In terms of assembly, homodimer which binds Holliday junction (HJ) DNA. The HJ becomes 2-fold symmetrical on binding to RuvC with unstacked arms; it has a different conformation from HJ DNA in complex with RuvA. In the full resolvosome a probable DNA-RuvA(4)-RuvB(12)-RuvC(2) complex forms which resolves the HJ. It depends on Mg(2+) as a cofactor.

The protein resides in the cytoplasm. It carries out the reaction Endonucleolytic cleavage at a junction such as a reciprocal single-stranded crossover between two homologous DNA duplexes (Holliday junction).. In terms of biological role, the RuvA-RuvB-RuvC complex processes Holliday junction (HJ) DNA during genetic recombination and DNA repair. Endonuclease that resolves HJ intermediates. Cleaves cruciform DNA by making single-stranded nicks across the HJ at symmetrical positions within the homologous arms, yielding a 5'-phosphate and a 3'-hydroxyl group; requires a central core of homology in the junction. The consensus cleavage sequence is 5'-(A/T)TT(C/G)-3'. Cleavage occurs on the 3'-side of the TT dinucleotide at the point of strand exchange. HJ branch migration catalyzed by RuvA-RuvB allows RuvC to scan DNA until it finds its consensus sequence, where it cleaves and resolves the cruciform DNA. This Burkholderia pseudomallei (strain 1710b) protein is Crossover junction endodeoxyribonuclease RuvC.